We begin with the raw amino-acid sequence, 531 residues long: HERV-H LTR-associating protein 1 (531 aa).

The N-terminal stretch at 1 to 29 (MLGFLSRGPSMKLCMGLACVLSLWNTVSG) is a signal peptide. N-linked (GlcNAc...) asparagine glycosylation is found at Asn79, Asn143, and Asn161. Disordered stretches follow at residues 231–289 (GTAR…RPPE) and 340–362 (EKKPGGSLWETRSSPPTTAGTEE). Composition is skewed to polar residues over residues 232 to 269 (TARTSKPTTKSQKTLPSTSPGHWTQSTPWASALRSSPW) and 349 to 362 (ETRSSPPTTAGTEE).

It localises to the secreted. This chain is HERV-H LTR-associating protein 1 (HHLA1), found in Homo sapiens (Human).